We begin with the raw amino-acid sequence, 621 residues long: Glutamyl-tRNA(Gln) amidotransferase subunit E (621 aa).

It belongs to the GatB/GatE family. GatE subfamily. As to quaternary structure, heterodimer of GatD and GatE.

The catalysed reaction is L-glutamyl-tRNA(Gln) + L-glutamine + ATP + H2O = L-glutaminyl-tRNA(Gln) + L-glutamate + ADP + phosphate + H(+). In terms of biological role, allows the formation of correctly charged Gln-tRNA(Gln) through the transamidation of misacylated Glu-tRNA(Gln) in organisms which lack glutaminyl-tRNA synthetase. The reaction takes place in the presence of glutamine and ATP through an activated gamma-phospho-Glu-tRNA(Gln). The GatDE system is specific for glutamate and does not act on aspartate. This is Glutamyl-tRNA(Gln) amidotransferase subunit E from Methanobrevibacter smithii (strain ATCC 35061 / DSM 861 / OCM 144 / PS).